The following is a 506-amino-acid chain: Cobyric acid synthase (506 aa).

The 198-residue stretch at 251 to 448 (DITIAIVQLP…LHGLFDSDAF (198 aa)) folds into the GATase cobBQ-type domain. The active-site Nucleophile is the Cys-332. His-440 is a catalytic residue.

It belongs to the CobB/CobQ family. CobQ subfamily.

Its pathway is cofactor biosynthesis; adenosylcobalamin biosynthesis. Functionally, catalyzes amidations at positions B, D, E, and G on adenosylcobyrinic A,C-diamide. NH(2) groups are provided by glutamine, and one molecule of ATP is hydrogenolyzed for each amidation. This Salmonella heidelberg (strain SL476) protein is Cobyric acid synthase.